We begin with the raw amino-acid sequence, 366 residues long: Chorismate synthase (366 aa).

Residues arginine 48 and arginine 54 each contribute to the NADP(+) site. FMN is bound by residues 125-127, 241-242, glycine 285, 300-304, and arginine 326; these read RSS, NA, and KPTSS.

Belongs to the chorismate synthase family. Homotetramer. FMNH2 is required as a cofactor.

The catalysed reaction is 5-O-(1-carboxyvinyl)-3-phosphoshikimate = chorismate + phosphate. Its pathway is metabolic intermediate biosynthesis; chorismate biosynthesis; chorismate from D-erythrose 4-phosphate and phosphoenolpyruvate: step 7/7. Functionally, catalyzes the anti-1,4-elimination of the C-3 phosphate and the C-6 proR hydrogen from 5-enolpyruvylshikimate-3-phosphate (EPSP) to yield chorismate, which is the branch point compound that serves as the starting substrate for the three terminal pathways of aromatic amino acid biosynthesis. This reaction introduces a second double bond into the aromatic ring system. The protein is Chorismate synthase of Cereibacter sphaeroides (strain ATCC 17023 / DSM 158 / JCM 6121 / CCUG 31486 / LMG 2827 / NBRC 12203 / NCIMB 8253 / ATH 2.4.1.) (Rhodobacter sphaeroides).